A 266-amino-acid chain; its full sequence is Zinc transport system ATP-binding protein TroB (266 aa).

Positions 11–243 constitute an ABC transporter domain; sequence VQVDDLTLAY…YVQRAYGGRI (233 aa). Position 43-50 (43-50) interacts with ATP; it reads GPNGAGKS.

The protein belongs to the ABC transporter superfamily.

Its function is as follows. Part of an ATP-driven transport system TroABCD for zinc. This Treponema pallidum (strain Nichols) protein is Zinc transport system ATP-binding protein TroB (troB).